The primary structure comprises 233 residues: Membrane steroid-binding protein 2 (233 aa).

A helical transmembrane segment spans residues 23-43 (AFFTVLALAFAVYQVVSGFFV). A Cytochrome b5 heme-binding domain is found at 70–167 (EITEEELKLY…SKYVKVGTIQ (98 aa)). Residues 70-167 (EITEEELKLY…SKYVKVGTIQ (98 aa)) are steroid-binding. 2 stretches are compositionally biased toward basic and acidic residues: residues 169 to 181 (KDGEGKESSEPSE) and 202 to 224 (THDETSRSTGEKIAETTEKKDVA). Positions 169–233 (KDGEGKESSE…ATDDDDAAKE (65 aa)) are disordered. Thr-225 is modified (phosphothreonine).

Belongs to the cytochrome b5 family. MAPR subfamily.

The protein localises to the cell membrane. The protein is Membrane steroid-binding protein 2 (MSBP2) of Arabidopsis thaliana (Mouse-ear cress).